Consider the following 189-residue polypeptide: Elongation factor P (189 aa).

At lysine 34 the chain carries N6-(3,6-diaminohexanoyl)-5-hydroxylysine.

This sequence belongs to the elongation factor P family. Post-translationally, may be beta-lysylated on the epsilon-amino group of Lys-34 by the combined action of EpmA and EpmB, and then hydroxylated on the C5 position of the same residue by EpmC (if this protein is present). Lysylation is critical for the stimulatory effect of EF-P on peptide-bond formation. The lysylation moiety may extend toward the peptidyltransferase center and stabilize the terminal 3-CCA end of the tRNA. Hydroxylation of the C5 position on Lys-34 may allow additional potential stabilizing hydrogen-bond interactions with the P-tRNA.

The protein localises to the cytoplasm. The protein operates within protein biosynthesis; polypeptide chain elongation. Involved in peptide bond synthesis. Alleviates ribosome stalling that occurs when 3 or more consecutive Pro residues or the sequence PPG is present in a protein, possibly by augmenting the peptidyl transferase activity of the ribosome. Modification of Lys-34 is required for alleviation. This chain is Elongation factor P, found in Dichelobacter nodosus (strain VCS1703A).